The primary structure comprises 318 residues: NADH-ubiquinone oxidoreductase chain 1 (318 aa).

A run of 8 helical transmembrane segments spans residues 2-22 (FMLNLLTMIVPVLLAVAFLTL), 68-88 (ITMFIMAPILALTLALTMWIP), 100-120 (LGVLFMLAMSSLAVYALLWSG), 147-167 (AIILLSTLLMSGSYSLSTLII), 171-191 (YIWLILPSWPLTMMWFISTLA), 217-237 (GGPFALFFLAEYANIIMMNAL), 254-273 (LYTTNFAMKTLLLTMSFLWI), and 294-314 (LPLTLALCMWYVTMPIMMAGI).

The protein belongs to the complex I subunit 1 family.

The protein resides in the mitochondrion inner membrane. The catalysed reaction is a ubiquinone + NADH + 5 H(+)(in) = a ubiquinol + NAD(+) + 4 H(+)(out). In terms of biological role, core subunit of the mitochondrial membrane respiratory chain NADH dehydrogenase (Complex I) that is believed to belong to the minimal assembly required for catalysis. Complex I functions in the transfer of electrons from NADH to the respiratory chain. The immediate electron acceptor for the enzyme is believed to be ubiquinone. The sequence is that of NADH-ubiquinone oxidoreductase chain 1 (MT-ND1) from Hsunycteris thomasi (Thomas's nectar bat).